The chain runs to 410 residues: Peptidase T (410 aa).

Histidine 79 serves as a coordination point for Zn(2+). Residue aspartate 81 is part of the active site. Aspartate 142 serves as a coordination point for Zn(2+). The active-site Proton acceptor is the glutamate 176. Zn(2+) is bound by residues glutamate 177, aspartate 199, and histidine 381.

The protein belongs to the peptidase M20B family. It depends on Zn(2+) as a cofactor.

It is found in the cytoplasm. It carries out the reaction Release of the N-terminal residue from a tripeptide.. Cleaves the N-terminal amino acid of tripeptides. The polypeptide is Peptidase T (Brevibacillus brevis (strain 47 / JCM 6285 / NBRC 100599)).